Consider the following 477-residue polypeptide: Ribulose bisphosphate carboxylase large chain (477 aa).

The propeptide occupies 1–2 (MS). Pro3 carries the N-acetylproline modification. The residue at position 14 (Lys14) is an N6,N6,N6-trimethyllysine. Asn123 and Thr173 together coordinate substrate. Lys175 (proton acceptor) is an active-site residue. Residue Lys177 coordinates substrate. The Mg(2+) site is built by Lys201, Asp203, and Glu204. Lys201 carries the N6-carboxylysine modification. The active-site Proton acceptor is the His294. Residues Arg295, His327, and Ser379 each contribute to the substrate site.

The protein belongs to the RuBisCO large chain family. Type I subfamily. Heterohexadecamer of 8 large chains and 8 small chains; disulfide-linked. The disulfide link is formed within the large subunit homodimers. It depends on Mg(2+) as a cofactor. In terms of processing, the disulfide bond which can form in the large chain dimeric partners within the hexadecamer appears to be associated with oxidative stress and protein turnover.

The protein localises to the plastid. It localises to the chloroplast. The enzyme catalyses 2 (2R)-3-phosphoglycerate + 2 H(+) = D-ribulose 1,5-bisphosphate + CO2 + H2O. It catalyses the reaction D-ribulose 1,5-bisphosphate + O2 = 2-phosphoglycolate + (2R)-3-phosphoglycerate + 2 H(+). RuBisCO catalyzes two reactions: the carboxylation of D-ribulose 1,5-bisphosphate, the primary event in carbon dioxide fixation, as well as the oxidative fragmentation of the pentose substrate in the photorespiration process. Both reactions occur simultaneously and in competition at the same active site. The sequence is that of Ribulose bisphosphate carboxylase large chain from Manihot esculenta (Cassava).